Consider the following 561-residue polypeptide: Dihydroxy-acid dehydratase (561 aa).

Residue Cys-50 coordinates [2Fe-2S] cluster. Residue Asp-82 coordinates Mg(2+). Cys-123 is a [2Fe-2S] cluster binding site. Positions 124 and 125 each coordinate Mg(2+). The residue at position 125 (Lys-125) is an N6-carboxylysine. Cys-195 contributes to the [2Fe-2S] cluster binding site. Residue Glu-447 coordinates Mg(2+). Ser-473 acts as the Proton acceptor in catalysis.

It belongs to the IlvD/Edd family. Homodimer. It depends on [2Fe-2S] cluster as a cofactor. The cofactor is Mg(2+).

It catalyses the reaction (2R)-2,3-dihydroxy-3-methylbutanoate = 3-methyl-2-oxobutanoate + H2O. It carries out the reaction (2R,3R)-2,3-dihydroxy-3-methylpentanoate = (S)-3-methyl-2-oxopentanoate + H2O. It participates in amino-acid biosynthesis; L-isoleucine biosynthesis; L-isoleucine from 2-oxobutanoate: step 3/4. Its pathway is amino-acid biosynthesis; L-valine biosynthesis; L-valine from pyruvate: step 3/4. Functionally, functions in the biosynthesis of branched-chain amino acids. Catalyzes the dehydration of (2R,3R)-2,3-dihydroxy-3-methylpentanoate (2,3-dihydroxy-3-methylvalerate) into 2-oxo-3-methylpentanoate (2-oxo-3-methylvalerate) and of (2R)-2,3-dihydroxy-3-methylbutanoate (2,3-dihydroxyisovalerate) into 2-oxo-3-methylbutanoate (2-oxoisovalerate), the penultimate precursor to L-isoleucine and L-valine, respectively. This Synechocystis sp. (strain ATCC 27184 / PCC 6803 / Kazusa) protein is Dihydroxy-acid dehydratase.